The following is a 602-amino-acid chain: Aspartate--tRNA(Asp/Asn) ligase (602 aa).

Glu175 is a binding site for L-aspartate. The aspartate stretch occupies residues 199 to 202 (QIFK). Arg221 is a binding site for L-aspartate. ATP contacts are provided by residues 221–223 (RDE) and Gln230. L-aspartate is bound at residue His458. Glu492 is an ATP binding site. Arg499 contributes to the L-aspartate binding site. Residue 544 to 547 (GLDR) coordinates ATP.

The protein belongs to the class-II aminoacyl-tRNA synthetase family. Type 1 subfamily. As to quaternary structure, homodimer.

The protein resides in the cytoplasm. It carries out the reaction tRNA(Asx) + L-aspartate + ATP = L-aspartyl-tRNA(Asx) + AMP + diphosphate. Functionally, aspartyl-tRNA synthetase with relaxed tRNA specificity since it is able to aspartylate not only its cognate tRNA(Asp) but also tRNA(Asn). Reaction proceeds in two steps: L-aspartate is first activated by ATP to form Asp-AMP and then transferred to the acceptor end of tRNA(Asp/Asn). The sequence is that of Aspartate--tRNA(Asp/Asn) ligase from Cupriavidus necator (strain ATCC 17699 / DSM 428 / KCTC 22496 / NCIMB 10442 / H16 / Stanier 337) (Ralstonia eutropha).